Here is a 58-residue protein sequence, read N- to C-terminus: uncharacterized protein (58 aa).

This is an uncharacterized protein from Bacillus anthracis.